The sequence spans 115 residues: NADH-ubiquinone oxidoreductase chain 3 (115 aa).

The next 3 helical transmembrane spans lie at 4-24 (LLVI…AFWL), 55-75 (FFLV…LLPI), and 84-104 (INMV…GLAY).

It belongs to the complex I subunit 3 family. Core subunit of respiratory chain NADH dehydrogenase (Complex I) which is composed of 45 different subunits. Interacts with TMEM186. Interacts with TMEM242.

The protein resides in the mitochondrion inner membrane. The catalysed reaction is a ubiquinone + NADH + 5 H(+)(in) = a ubiquinol + NAD(+) + 4 H(+)(out). Core subunit of the mitochondrial membrane respiratory chain NADH dehydrogenase (Complex I) which catalyzes electron transfer from NADH through the respiratory chain, using ubiquinone as an electron acceptor. Essential for the catalytic activity of complex I. This Ochrotomys nuttalli (Golden mouse) protein is NADH-ubiquinone oxidoreductase chain 3.